Reading from the N-terminus, the 149-residue chain is Probable flagellum biosynthesis repressor protein FlbT (149 aa).

This sequence belongs to the FlbT family.

In terms of biological role, has a post-transcriptional repressor function in flagellum biogenesis. Associates with the 5'-UTR of fljK mRNA and promotes its degradation. This Allorhizobium ampelinum (strain ATCC BAA-846 / DSM 112012 / S4) (Agrobacterium vitis (strain S4)) protein is Probable flagellum biosynthesis repressor protein FlbT.